Consider the following 311-residue polypeptide: Thioredoxin reductase (311 aa).

Position 35–42 (35–42 (ERGIPGGQ)) interacts with FAD. The cysteines at positions 134 and 137 are disulfide-linked. 277–286 (DVRDKGLRQI) contributes to the FAD binding site.

The protein belongs to the class-II pyridine nucleotide-disulfide oxidoreductase family. As to quaternary structure, homodimer. FAD is required as a cofactor.

The protein localises to the cytoplasm. It catalyses the reaction [thioredoxin]-dithiol + NADP(+) = [thioredoxin]-disulfide + NADPH + H(+). This is Thioredoxin reductase (trxB) from Staphylococcus aureus (strain COL).